Here is a 193-residue protein sequence, read N- to C-terminus: Dual-action ribosomal maturation protein DarP (193 aa).

The span at 1-10 (MRGRDEDTGE) shows a compositional bias: basic and acidic residues. 2 disordered regions span residues 1 to 20 (MRGR…SQQR) and 170 to 193 (SQKP…ENDE). Positions 181-193 (GLEDEESASENDE) are enriched in acidic residues.

It belongs to the DarP family.

The protein localises to the cytoplasm. Member of a network of 50S ribosomal subunit biogenesis factors which assembles along the 30S-50S interface, preventing incorrect 23S rRNA structures from forming. Promotes peptidyl transferase center (PTC) maturation. This is Dual-action ribosomal maturation protein DarP from Xanthomonas campestris pv. campestris (strain 8004).